We begin with the raw amino-acid sequence, 249 residues long: NADH dehydrogenase [ubiquinone] flavoprotein 2, mitochondrial (249 aa).

Residues 1-32 (MFFSAALRARAAGLTAHWGRHVRNLHKTAKQN) constitute a mitochondrion transit peptide. Lys-61 carries the post-translational modification N6-acetyllysine. [2Fe-2S] cluster contacts are provided by Cys-135, Cys-140, Cys-176, and Cys-180. Tyr-193 carries the phosphotyrosine; by SRC modification. The disordered stretch occupies residues 213–249 (IPKPGPRSGRFSCEPAGGLTSLTEPPKGPGFGVQAGL).

The protein belongs to the complex I 24 kDa subunit family. In terms of assembly, core subunit of respiratory chain NADH dehydrogenase (Complex I) which is composed of 45 different subunits. This is a component of the flavoprotein-sulfur (FP) fragment of the enzyme. [2Fe-2S] cluster serves as cofactor.

The protein resides in the mitochondrion inner membrane. It catalyses the reaction a ubiquinone + NADH + 5 H(+)(in) = a ubiquinol + NAD(+) + 4 H(+)(out). Its function is as follows. Core subunit of the mitochondrial membrane respiratory chain NADH dehydrogenase (Complex I) which catalyzes electron transfer from NADH through the respiratory chain, using ubiquinone as an electron acceptor. Parts of the peripheral arm of the enzyme, where the electrons from NADH are accepted by flavin mononucleotide (FMN) and then passed along a chain of iron-sulfur clusters by electron tunnelling to the final acceptor ubiquinone. Contains one iron-sulfur cluster. The sequence is that of NADH dehydrogenase [ubiquinone] flavoprotein 2, mitochondrial from Pan troglodytes (Chimpanzee).